Here is a 742-residue protein sequence, read N- to C-terminus: Polyribonucleotide nucleotidyltransferase (742 aa).

Mg(2+) contacts are provided by Asp515 and Asp521. The region spanning 581–640 (PRIITITIPVDKIGEVIGPKGKIINQIQDDTGASISIEDDGTIYIGATNGEAAEAAKNAV) is the KH domain. The 73-residue stretch at 652-724 (GERYLGTVVK…DRGKLSLVPV (73 aa)) folds into the S1 motif domain.

This sequence belongs to the polyribonucleotide nucleotidyltransferase family. Requires Mg(2+) as cofactor.

It is found in the cytoplasm. The enzyme catalyses RNA(n+1) + phosphate = RNA(n) + a ribonucleoside 5'-diphosphate. Its function is as follows. Involved in mRNA degradation. Catalyzes the phosphorolysis of single-stranded polyribonucleotides processively in the 3'- to 5'-direction. The sequence is that of Polyribonucleotide nucleotidyltransferase from Nocardioides sp. (strain ATCC BAA-499 / JS614).